The sequence spans 644 residues: Replication protein E1 (644 aa).

Positions 86–88 (KRK) match the Nuclear localization signal motif. 2 positions are modified to phosphoserine; by host: S92 and S96. The interval 180–346 (VPTSPTNQLL…LTIIQHGVDD (167 aa)) is DNA-binding region. The SF3 helicase domain maps to 445 to 595 (VEFITFLCAL…LPFDKNRNPV (151 aa)). 471–478 (GPANTGKS) is an ATP binding site. K552 participates in a covalent cross-link: Glycyl lysine isopeptide (Lys-Gly) (interchain with G-Cter in SUMO).

It belongs to the papillomaviridae E1 protein family. In terms of assembly, can form hexamers. Interacts with E2 protein; this interaction increases E1 DNA binding specificity. Interacts with host DNA polymerase subunit POLA2. Interacts with host single stranded DNA-binding protein RPA1. Interacts with host TOP1; this interaction stimulates the enzymatic activity of TOP1. In terms of processing, phosphorylated. Sumoylated.

It localises to the host nucleus. The enzyme catalyses Couples ATP hydrolysis with the unwinding of duplex DNA by translocating in the 3'-5' direction.. It carries out the reaction ATP + H2O = ADP + phosphate + H(+). In terms of biological role, ATP-dependent DNA 3'-5' helicase required for initiation of viral DNA replication. It forms a complex with the viral E2 protein. The E1-E2 complex binds to the replication origin which contains binding sites for both proteins. During the initial step, a dimer of E1 interacts with a dimer of protein E2 leading to a complex that binds the viral origin of replication with high specificity. Then, a second dimer of E1 displaces the E2 dimer in an ATP-dependent manner to form the E1 tetramer. Following this, two E1 monomers are added to each half of the site, which results in the formation of two E1 trimers on the viral ori. Subsequently, two hexamers will be created. The double hexamer acts as a bi-directional helicase machinery and unwinds the viral DNA and then recruits the host DNA polymerase to start replication. The polypeptide is Replication protein E1 (Human papillomavirus 59).